A 249-amino-acid chain; its full sequence is Transmembrane protein 51 (249 aa).

2 helical membrane passes run 17 to 37 (IGLG…VPGF) and 64 to 84 (VAYV…CLSI). Disordered stretches follow at residues 95–126 (ELAR…SRYY), 161–199 (TGLD…PLKV), and 213–249 (RITL…RPPD). Polar residues predominate over residues 99–108 (IQQQAGTVPH). Phosphoserine occurs at positions 109, 114, 178, and 188. Residues 167–178 (TPTSTRAETETS) show a composition bias toward polar residues. Basic residues predominate over residues 190-199 (LAKRLKPLKV). Pro residues predominate over residues 220 to 234 (NVPPPSIEPLTPPPL).

It is found in the membrane. The polypeptide is Transmembrane protein 51 (Tmem51) (Mus musculus (Mouse)).